The following is a 699-amino-acid chain: Condensin complex subunit 2 (699 aa).

Disordered regions lie at residues 1 to 35 (MSTSTPQSGGRRKPETPDSAFLSPATRPQPISAAA) and 176 to 203 (ESQATEDTENQETDTGPQDGRKNPKRRK).

It belongs to the CND2 (condensin subunit 2) family. In terms of assembly, component of the condensin complex, which contains the XCAP-E/SMC2 and XCAP-C/SMC4 heterodimer, and three non SMC subunits that probably regulate the complex: XCAP-H/NCAPH, XCAP-D2/NCAPD2 and XCAP-G/NCAPG. In terms of processing, phosphorylated by CDK1. Its phosphorylation, as well as that of XCAP-D2 and XCAP-G subunits, activates the condensin complex and is required for chromosome condensation.

It localises to the nucleus. Its subcellular location is the cytoplasm. It is found in the chromosome. Its function is as follows. Regulatory subunit of the condensin complex, a complex required for conversion of interphase chromatin into mitotic-like condense chromosomes. The condensin complex probably introduces positive supercoils into relaxed DNA in the presence of type I topoisomerases and converts nicked DNA into positive knotted forms in the presence of type II topoisomerase. This is Condensin complex subunit 2 (ncaph) from Xenopus laevis (African clawed frog).